Reading from the N-terminus, the 260-residue chain is Small ribosomal subunit protein uS2 (260 aa).

The protein belongs to the universal ribosomal protein uS2 family.

In Gluconacetobacter diazotrophicus (strain ATCC 49037 / DSM 5601 / CCUG 37298 / CIP 103539 / LMG 7603 / PAl5), this protein is Small ribosomal subunit protein uS2.